A 121-amino-acid chain; its full sequence is Holo-[acyl-carrier-protein] synthase (121 aa).

2 residues coordinate Mg(2+): Asp8 and Glu58.

Belongs to the P-Pant transferase superfamily. AcpS family. In terms of assembly, homotrimer. Mg(2+) serves as cofactor.

It localises to the cytoplasm. The catalysed reaction is apo-[ACP] + CoA = holo-[ACP] + adenosine 3',5'-bisphosphate + H(+). Its function is as follows. Transfers the 4'-phosphopantetheine moiety from coenzyme A to a Ser of fatty acid acyl-carrier-protein ACP. Also modifies the D-alanyl carrier protein but fails to recognize PCP and AcpK, an acyl carrier protein of secondary metabolism. This Bacillus subtilis (strain 168) protein is Holo-[acyl-carrier-protein] synthase.